The chain runs to 539 residues: Sphingosine-1-phosphate lyase (539 aa).

The N-terminal stretch at 1–46 (MELAMDFALRLRDAANHHLSRYEPLVLLAAPLLALLAARTLHAAAA) is a signal peptide. Residues 47–54 (AVADRGLR) are Lumenal-facing. Residues 55 to 75 (TVLLALAMTAIKLLPGVSAYI) traverse the membrane as a helical segment. Residues 76–539 (NAEKRKVVDQ…LLVEFMDASC (464 aa)) are Cytoplasmic-facing. At Lys-344 the chain carries N6-(pyridoxal phosphate)lysine.

It belongs to the group II decarboxylase family. Sphingosine-1-phosphate lyase subfamily. It depends on pyridoxal 5'-phosphate as a cofactor.

It is found in the endoplasmic reticulum membrane. The catalysed reaction is sphinganine 1-phosphate = hexadecanal + phosphoethanolamine. It functions in the pathway lipid metabolism; sphingolipid metabolism. Cleaves phosphorylated sphingoid bases (PSBs), such as sphingosine-1-phosphate, into fatty aldehydes and phosphoethanolamine. Elevates stress-induced ceramide production and apoptosis. This chain is Sphingosine-1-phosphate lyase (SPL), found in Oryza sativa subsp. japonica (Rice).